A 285-amino-acid chain; its full sequence is Probable endonuclease 4 (285 aa).

Residues histidine 69, histidine 109, glutamate 145, aspartate 179, histidine 182, histidine 216, aspartate 229, histidine 231, and glutamate 261 each contribute to the Zn(2+) site.

The protein belongs to the AP endonuclease 2 family. It depends on Zn(2+) as a cofactor.

The catalysed reaction is Endonucleolytic cleavage to 5'-phosphooligonucleotide end-products.. Endonuclease IV plays a role in DNA repair. It cleaves phosphodiester bonds at apurinic or apyrimidinic (AP) sites, generating a 3'-hydroxyl group and a 5'-terminal sugar phosphate. This chain is Probable endonuclease 4, found in Shigella boydii serotype 18 (strain CDC 3083-94 / BS512).